Here is a 118-residue protein sequence, read N- to C-terminus: Small ribosomal subunit protein uS13 (118 aa).

The disordered stretch occupies residues 92-118 (RRGHPLRGQRTRTNARTRKGPRKAIRK).

The protein belongs to the universal ribosomal protein uS13 family. Part of the 30S ribosomal subunit. Forms a loose heterodimer with protein S19. Forms two bridges to the 50S subunit in the 70S ribosome.

Located at the top of the head of the 30S subunit, it contacts several helices of the 16S rRNA. In the 70S ribosome it contacts the 23S rRNA (bridge B1a) and protein L5 of the 50S subunit (bridge B1b), connecting the 2 subunits; these bridges are implicated in subunit movement. Contacts the tRNAs in the A and P-sites. The chain is Small ribosomal subunit protein uS13 from Xanthomonas campestris pv. campestris (strain ATCC 33913 / DSM 3586 / NCPPB 528 / LMG 568 / P 25).